A 115-amino-acid polypeptide reads, in one-letter code: UPF0102 protein NMB2089 (115 aa).

Belongs to the UPF0102 family.

This chain is UPF0102 protein NMB2089, found in Neisseria meningitidis serogroup B (strain ATCC BAA-335 / MC58).